A 378-amino-acid chain; its full sequence is Quinolinate synthase (378 aa).

Positions 59 and 80 each coordinate iminosuccinate. Cys125 lines the [4Fe-4S] cluster pocket. Residues 151 to 153 and Ser168 contribute to the iminosuccinate site; that span reads YAN. Residue Cys212 coordinates [4Fe-4S] cluster. Iminosuccinate-binding positions include 238 to 240 and Thr255; that span reads HPE. Residue Cys309 participates in [4Fe-4S] cluster binding.

The protein belongs to the quinolinate synthase family. Type 1 subfamily. Requires [4Fe-4S] cluster as cofactor.

The protein localises to the cytoplasm. It catalyses the reaction iminosuccinate + dihydroxyacetone phosphate = quinolinate + phosphate + 2 H2O + H(+). It functions in the pathway cofactor biosynthesis; NAD(+) biosynthesis; quinolinate from iminoaspartate: step 1/1. Functionally, catalyzes the condensation of iminoaspartate with dihydroxyacetone phosphate to form quinolinate. The polypeptide is Quinolinate synthase (Burkholderia thailandensis (strain ATCC 700388 / DSM 13276 / CCUG 48851 / CIP 106301 / E264)).